The primary structure comprises 125 residues: Prepro-urotensin II-gamma (125 aa).

The first 21 residues, 1–21 (MMCNLLLSCSVLLLSCSHLLA), serve as a signal peptide directing secretion. Positions 109-111 (QFR) are excised as a propeptide. The cysteines at positions 119 and 124 are disulfide-linked.

Belongs to the urotensin-2 family.

It localises to the secreted. In terms of biological role, urotensin is found in the teleost caudal neurosecretory system. It has a suggested role in osmoregulation and as a corticotropin-releasing factor. The non-hormonal portion of this precursor may be a urotensin binding protein, urophysin. This Cyprinus carpio (Common carp) protein is Prepro-urotensin II-gamma.